We begin with the raw amino-acid sequence, 1216 residues long: RAB11-binding protein RELCH (1216 aa).

Disordered regions lie at residues 1-73 (MAAM…GLPG) and 135-177 (GNFE…QLNR). Position 2 is an N-acetylalanine (Ala-2). Residues Ser-20 and Ser-22 each carry the phosphoserine modification. A compositionally biased stretch (acidic residues) spans 21–31 (DSDEDDDEVAA). Residue Thr-32 is modified to Phosphothreonine. A phosphoserine mark is found at Ser-54 and Ser-56. Gly residues predominate over residues 148 to 163 (GAPGVPGAAGVGGAGG). A phosphoserine mark is found at Ser-180 and Ser-182. Position 183 is a phosphothreonine (Thr-183). Residue Ser-186 is modified to Phosphoserine. Residues 197-231 (NRETDEKVAVLEFELRKAKETIQALRANLTKAAEH) adopt a coiled-coil conformation. The LisH domain occupies 255–287 (EKRALNFLVNEFLLKNNYKLTSITFSDENDDQD). Positions 359 to 397 (VQKLEDKISLLNSEKWSLMEQIRRLKSEMDFLKNEHFAI) form a coiled coil. Ser-385 bears the Phosphoserine mark. The tract at residues 401 to 477 (CDSVQPPLDQ…SSLSSKKTVH (77 aa)) is disordered. Residues 411–435 (LPHKDSEDSGQHPDVNSSDKGKNTD) are compositionally biased toward basic and acidic residues. Ser-453 carries the phosphoserine modification. Positions 497–779 (CRMSADSRLG…SSKAKLHGEV (283 aa)) are interaction with RAB11A and RAB11B. 2 HEAT repeats span residues 601–639 (LLPQ…RSSL) and 640–679 (VLSM…KYHQ). Phosphoserine is present on Ser-792. Residues 1004–1042 (VAPALVTLSSDPEFSVRIATIPAFGTIMETVIQRELLER) form an HEAT 3 repeat. Residue Ser-1149 is modified to Phosphoserine.

Its subcellular location is the recycling endosome. The protein resides in the golgi apparatus. It localises to the trans-Golgi network. In terms of biological role, regulates intracellular cholesterol distribution from recycling endosomes to the trans-Golgi network through interactions with RAB11 and OSBP. Functions in membrane tethering and promotes OSBP-mediated cholesterol transfer between RAB11-bound recycling endosomes and OSBP-bound Golgi-like membranes. The protein is RAB11-binding protein RELCH of Homo sapiens (Human).